The primary structure comprises 209 residues: Endonuclease III (209 aa).

The HhH domain occupies 108-127 (RTELESLPGVGRKTANIILN). [4Fe-4S] cluster contacts are provided by Cys187, Cys194, Cys197, and Cys203.

This sequence belongs to the Nth/MutY family. [4Fe-4S] cluster is required as a cofactor.

It carries out the reaction 2'-deoxyribonucleotide-(2'-deoxyribose 5'-phosphate)-2'-deoxyribonucleotide-DNA = a 3'-end 2'-deoxyribonucleotide-(2,3-dehydro-2,3-deoxyribose 5'-phosphate)-DNA + a 5'-end 5'-phospho-2'-deoxyribonucleoside-DNA + H(+). In terms of biological role, DNA repair enzyme that has both DNA N-glycosylase activity and AP-lyase activity. The DNA N-glycosylase activity releases various damaged pyrimidines from DNA by cleaving the N-glycosidic bond, leaving an AP (apurinic/apyrimidinic) site. The AP-lyase activity cleaves the phosphodiester bond 3' to the AP site by a beta-elimination, leaving a 3'-terminal unsaturated sugar and a product with a terminal 5'-phosphate. This is Endonuclease III from Buchnera aphidicola subsp. Schizaphis graminum (strain Sg).